Consider the following 292-residue polypeptide: Probable deoxyhypusine synthase (292 aa).

Lys267 functions as the Nucleophile in the catalytic mechanism.

Belongs to the deoxyhypusine synthase family. NAD(+) serves as cofactor.

It catalyses the reaction [eIF5A protein]-L-lysine + spermidine = [eIF5A protein]-deoxyhypusine + propane-1,3-diamine. It functions in the pathway protein modification; eIF5A hypusination. Functionally, catalyzes the NAD-dependent oxidative cleavage of spermidine and the subsequent transfer of the butylamine moiety of spermidine to the epsilon-amino group of a specific lysine residue of the eIF-5A precursor protein to form the intermediate deoxyhypusine residue. This is Probable deoxyhypusine synthase (dys) from Pyrobaculum aerophilum (strain ATCC 51768 / DSM 7523 / JCM 9630 / CIP 104966 / NBRC 100827 / IM2).